The following is a 218-amino-acid chain: Peptide methionine sulfoxide reductase MsrA (218 aa).

Residues 1 to 28 (MSFLDSYRKKTQMPSTDEALPGRAQPIP) form a disordered region. Cysteine 57 is an active-site residue.

It belongs to the MsrA Met sulfoxide reductase family.

It catalyses the reaction L-methionyl-[protein] + [thioredoxin]-disulfide + H2O = L-methionyl-(S)-S-oxide-[protein] + [thioredoxin]-dithiol. The catalysed reaction is [thioredoxin]-disulfide + L-methionine + H2O = L-methionine (S)-S-oxide + [thioredoxin]-dithiol. Has an important function as a repair enzyme for proteins that have been inactivated by oxidation. Catalyzes the reversible oxidation-reduction of methionine sulfoxide in proteins to methionine. The sequence is that of Peptide methionine sulfoxide reductase MsrA from Brucella anthropi (strain ATCC 49188 / DSM 6882 / CCUG 24695 / JCM 21032 / LMG 3331 / NBRC 15819 / NCTC 12168 / Alc 37) (Ochrobactrum anthropi).